Here is a 262-residue protein sequence, read N- to C-terminus: Phosphatidylglycerol--prolipoprotein diacylglyceryl transferase (262 aa).

4 consecutive transmembrane segments (helical) span residues 9–29 (LGPL…ILAV), 41–61 (IIPD…ILGA), 80–100 (IFAI…GALV), and 109–129 (LINT…AQSL). Residue R131 coordinates a 1,2-diacyl-sn-glycero-3-phospho-(1'-sn-glycerol). Helical transmembrane passes span 167 to 187 (QPTF…ILIF), 197 to 217 (GHIT…IEGM), and 227 to 247 (LRVS…IVIY).

It belongs to the Lgt family.

The protein localises to the cell membrane. The catalysed reaction is L-cysteinyl-[prolipoprotein] + a 1,2-diacyl-sn-glycero-3-phospho-(1'-sn-glycerol) = an S-1,2-diacyl-sn-glyceryl-L-cysteinyl-[prolipoprotein] + sn-glycerol 1-phosphate + H(+). The protein operates within protein modification; lipoprotein biosynthesis (diacylglyceryl transfer). Functionally, catalyzes the transfer of the diacylglyceryl group from phosphatidylglycerol to the sulfhydryl group of the N-terminal cysteine of a prolipoprotein, the first step in the formation of mature lipoproteins. This chain is Phosphatidylglycerol--prolipoprotein diacylglyceryl transferase, found in Streptococcus pneumoniae (strain JJA).